The sequence spans 141 residues: Neuropeptides CP2 (141 aa).

A signal peptide spans 1-26 (MDSRICTSFARLMASALCVSTLLVTA). The tract at residues 75 to 94 (KVDMPLPRQRTSSRSSERWA) is disordered. His140 is modified (histidine amide).

In terms of tissue distribution, neurons.

It is found in the secreted. In terms of biological role, mediates intrinsic neuromodulation. The sequence is that of Neuropeptides CP2 (CP2PP) from Aplysia californica (California sea hare).